The sequence spans 727 residues: MWKSIGELSCDDYVKAGLTLEDAKEFDKLVSDVITKAIETDPRDQWKALVDESVLKPWHPHPLHQLLYYSVYSNWDSSVHGPPLYWFPSLSQSKSTNLGKLMEYHGPRLLGPSYKNPLESFELFRRFSVEHPEVYWSFVIDELSLVFHTPPRCILNKSKPEGTWLPDAVLNIAECCLMPSSHPKKEDDSVAVVWRNEGFDDSPVNRMTIKELREQVMLVANAISGSFEKGDTIAIDMPMTVDAVIIYLAIILAGCIVVSIADSFAAKEIATRLKISKAKGIFTQDYILRGGRRFPLYSRVVEAAPSKVIVLPASGTELHVQLREQDVSWMDFLSNAKPHSSGENYYRPIYLPVESVINILFSSGTTGEPKAIPWTQLSPIRSACDGWAHLDVQVGHTYCWPTNLGWVMGPTLMFSCFLTGATLALYSGSPLGRGFGKFVQDAGVTVLGTVPSLVKTWKRTNCMEGLNWTKIKFFATTGEASNVDDVLWLSSKADYKPVIECCGGTELASSYIIGSPLQPQAFGAFSTPSMTTRIIIFDENGVPYPDDQPCTGEVGLFPQHLGATDRLLNANHDEVYFKGMPMYKETRLRRHGDIVKRTVGGYYNVQGRADDTMNLGGIKTSSIEIERVCDQADECISETAAVTLTPPNGGPELLVIFAVLKEGFKQQSGEELKMKFSRTIQKDLNPLFKVSFVKIVPEFPRTASSKLLRRVLRDQIKQELLSLRSRI.

The Microbody targeting signal motif lies at 725-727 (SRI).

Belongs to the ATP-dependent AMP-binding enzyme family. Expressed in flowers.

The protein localises to the peroxisome. Its function is as follows. May be involved in the peroxisomal activation of 2,4-dichlorophenoxybutyric acid (2,4-DB), a precursor of active auxins that inhibit root growth. The protein is Probable acyl-activating enzyme 18, peroxisomal (AAE18) of Arabidopsis thaliana (Mouse-ear cress).